A 713-amino-acid polypeptide reads, in one-letter code: MAAVQGQGQGKLLYIVVVDDDGATFRYTRSLLHSTLQLMGCKPRHAFEISGRVFDEIRGHMGGDMAMGGGGGVQRYELAADAEAASPRQFQFELYKRRTTLLIPRPLFLRLVCHALALYKYVAPDQRSDLHRACRIRERKESVTILLCGTSGCGKSTLSTLLGSRLGITTVVSTDSIRHMMRSFVEEKQNPLLWASTYHAGECLDPVAVADAKARRKAKKRSGISTTSTIDFDKTRPLNDKPDGKPIGKKQMAIEGYKAQSEMVIDSLDRLITAWEDRKESVVVEGVHLSLNFVMGLMRKHPSIIPFMIYISDEGKHTERFAVRAKYMTLDPTKNKYVKYISNIRTIQEYLCSRADKYLVPKVNNTNVDRSVASIHATVFSCLRRRAAGDQLYDPATNTVAVVNEEYKNQCVANSMSSKGMFKLIQRLGSSRKLMAIVNVDGSVSKAWPVESSSGDGKGGSENGSKKYVGDPIYGPLNIGRAESVNLQFGAFGISAWPTDAGCTSQAGSVNESWDNANEGTGSHVPSSSGSPKKLDGHCKEIKESAAASGSDDDEEEEEEAADVPPNSGSEEDLSEEDIRAIHEEMEGSVDEDCNRSDEEYDDLAMRDCMENGFLTDDGVVHTVFDGNGQKHSTLRKRQVNLRTLSKIDLDSPDTARSSSALPISASSKRNGTRRWKRSLSESFRSRPRSAPSLVELTPKHKGSAVPEVAPDK.

Disordered regions lie at residues 218–249 (AKKRSGISTTSTIDFDKTRPLNDKPDGKPIGK), 504–575 (TSQA…EDLS), and 650–713 (LDSP…APDK). Residues 231 to 246 (DFDKTRPLNDKPDGKP) show a composition bias toward basic and acidic residues. Polar residues predominate over residues 504–531 (TSQAGSVNESWDNANEGTGSHVPSSSGS). The segment covering 533-544 (KKLDGHCKEIKE) has biased composition (basic and acidic residues). Residues 551–562 (SDDDEEEEEEAA) show a composition bias toward acidic residues. Residues 656–668 (ARSSSALPISASS) are compositionally biased toward low complexity.

Required for the accumulation of phytic acid in seeds. Phytic acid is the primary storage form of phosphorus in cereal grains and other plant seeds. The protein is P-loop NTPase domain-containing protein LPA1 homolog of Oryza sativa subsp. japonica (Rice).